We begin with the raw amino-acid sequence, 1180 residues long: Nonsense-mediated mRNA decay factor SMG7 (1180 aa).

2 TPR repeats span residues 151-184 (QHCL…VPSN) and 186-218 (QPYN…KFPF). 5 disordered regions span residues 496–636 (PQEK…TQTT), 692–795 (QTAS…SYMQ), 893–913 (CSDQ…SSPL), 1019–1127 (SLFE…WAAQ), and 1148–1180 (SSMM…NPPH). The segment covering 504–520 (LQESSNGEQTPNESTHG) has biased composition (polar residues). 3 stretches are compositionally biased toward basic and acidic residues: residues 547-559 (ENIK…REQN), 584-606 (NEQK…KTTD), and 615-627 (TELR…EARK). Residues 692-718 (QTASHPQSANPVQTGKPSHIPYSQQRP) show a composition bias toward polar residues. A compositionally biased stretch (pro residues) spans 728–740 (PPQPQQTQPPPPQ). Over residues 741-778 (TSQQALQQSVQLQLQQQQQQQQQQQQQQQQSPTKQSSQ) the composition is skewed to low complexity. Positions 1026 to 1038 (WSPSLPASSDHST) are enriched in polar residues. Positions 1039-1065 (PASQSPHSSNPSSLPSSPPTHSHGSMP) are enriched in low complexity. Over residues 1076-1090 (DSRDRRANDRWKAEK) the composition is skewed to basic and acidic residues. Over residues 1103–1125 (SASTSSVPETNSWHQGAPTSTWA) the composition is skewed to polar residues.

The protein localises to the cytoplasm. Its subcellular location is the nucleus. In terms of biological role, plays a role in nonsense-mediated mRNA decay. Recruits UPF1 to cytoplasmic mRNA decay bodies. Together with SMG5 is thought to provide a link to the mRNA degradation machinery involving exonucleolytic pathways, and to serve as an adapter for UPF1 to protein phosphatase 2A (PP2A), thereby triggering UPF1 dephosphorylation. Required for normal embryonic development. The sequence is that of Nonsense-mediated mRNA decay factor SMG7 from Danio rerio (Zebrafish).